The chain runs to 122 residues: Large ribosomal subunit protein uL14 (122 aa).

It belongs to the universal ribosomal protein uL14 family. As to quaternary structure, part of the 50S ribosomal subunit. Forms a cluster with proteins L3 and L19. In the 70S ribosome, L14 and L19 interact and together make contacts with the 16S rRNA in bridges B5 and B8.

Binds to 23S rRNA. Forms part of two intersubunit bridges in the 70S ribosome. This chain is Large ribosomal subunit protein uL14, found in Desulforapulum autotrophicum (strain ATCC 43914 / DSM 3382 / VKM B-1955 / HRM2) (Desulfobacterium autotrophicum).